The primary structure comprises 1800 residues: U3 small nucleolar RNA-associated protein 10 (1800 aa).

2 HEAT repeats span residues 426–467 (FTQS…TTPA) and 581–619 (DVDL…LYKK). A run of 2 helical transmembrane segments spans residues 944-964 (IQSG…AIVN) and 1000-1020 (ALLL…HSVM). HEAT repeat units follow at residues 1043–1081 (DQTI…AFEH), 1250–1288 (TLSL…QNPE), 1294–1333 (QHRM…KYGR), and 1755–1793 (LALL…VLGE).

The protein belongs to the HEATR1/UTP10 family. Component of the ribosomal small subunit (SSU) processome.

It is found in the nucleus. It localises to the nucleolus. The protein localises to the membrane. In terms of biological role, involved in nucleolar processing of pre-18S ribosomal RNA. Involved in ribosome biosynthesis. The polypeptide is U3 small nucleolar RNA-associated protein 10 (Aspergillus niger (strain ATCC MYA-4892 / CBS 513.88 / FGSC A1513)).